The chain runs to 336 residues: Protein REVEILLE 7-like (336 aa).

The 55-residue stretch at Thr60 to Ala114 folds into the HTH myb-type domain. The H-T-H motif DNA-binding region spans Trp87–Phe110. Residues Ala114–Ile197 are disordered. The span at Arg134 to Pro144 shows a compositional bias: basic residues. The span at Arg145–Asn158 shows a compositional bias: pro residues. The span at Lys167–Gln189 shows a compositional bias: polar residues.

It is found in the nucleus. Functionally, probable transcription factor. The polypeptide is Protein REVEILLE 7-like (RVE7L) (Arabidopsis thaliana (Mouse-ear cress)).